We begin with the raw amino-acid sequence, 401 residues long: Putative F-box/FBD/LRR-repeat protein At3g23955 (401 aa).

The region spanning 56 to 102 (VPARFQLPDPLLTQILNHLPTEEAVKTSVLSTRWRTLWLWVHNLELS) is the F-box domain. 2 LRR repeats span residues 128-152 (IESL…AFVK) and 275-296 (MSSL…FLRS). In terms of domain architecture, FBD spans 321 to 373 (IKRVSISSVPECLLSSLEFVEFKAPICGLAPEMMLVWYFLENSPTLKKLTLRL).

This chain is Putative F-box/FBD/LRR-repeat protein At3g23955, found in Arabidopsis thaliana (Mouse-ear cress).